A 512-amino-acid chain; its full sequence is RCC1 domain-containing protein DDB_G0279253 (512 aa).

RCC1 repeat units follow at residues 1-56, 58-134, 135-185, 197-248, 249-319, 321-384, 386-443, and 454-512; these read MKIY…MIID, GDLY…ACDN, NGNI…NNNN, SGGV…ALSS, ENDV…LLDI, FKNV…LLTN, DKLY…IQVY, and NNNI…FILP. Polar residues predominate over residues 66–77; it reads NDSGQLGINSNE. 2 disordered regions span residues 66 to 85 and 162 to 200; these read NDSGQLGINSNEQQQQQQQQ and STSNNKNNNNNNNNNNNNNNNNNNNNNNNNNNNNNSGGV. Residues 162–196 show a composition bias toward low complexity; sequence STSNNKNNNNNNNNNNNNNNNNNNNNNNNNNNNNN.

The chain is RCC1 domain-containing protein DDB_G0279253 from Dictyostelium discoideum (Social amoeba).